A 217-amino-acid chain; its full sequence is UPF0502 protein PFLU_2135 (217 aa).

This sequence belongs to the UPF0502 family.

The protein is UPF0502 protein PFLU_2135 of Pseudomonas fluorescens (strain SBW25).